We begin with the raw amino-acid sequence, 39 residues long: RapF inhibitor (39 aa).

The propeptide occupies 1-34 (MKLKSKLLLSCLALSTVFVATTIANAPTHQIEVA).

This sequence belongs to the Phr family. In terms of assembly, interacts with RapF and inhibits its interaction with ComA. Contains a predicted signal peptide cleavage site in the N-terminal region, however the propeptide is probably subject to only one processing event, at the N-terminal end of the mature peptide.

It localises to the secreted. The protein localises to the cytoplasm. In terms of biological role, signaling molecule involved in the regulation of genetic competence development. Secreted during production, but the mature peptide acts intracellularly, indicating that it needs to be imported into the cell to function. Stimulates expression of the genes controlled by ComA, a transcriptional factor that regulates the development of genetic competence. Acts by inhibiting RapF, which regulates the activity of ComA. This chain is RapF inhibitor (phrF), found in Bacillus subtilis (strain 168).